The primary structure comprises 160 residues: Phosphopantetheine adenylyltransferase (160 aa).

Residue S10 coordinates substrate. ATP is bound by residues 10 to 11 and H18; that span reads SF. Substrate contacts are provided by K42, T74, and R88. Residues 89–91, E99, and 124–130 contribute to the ATP site; these read GLR and YSFISST.

This sequence belongs to the bacterial CoaD family. As to quaternary structure, homohexamer. Mg(2+) serves as cofactor.

It is found in the cytoplasm. It carries out the reaction (R)-4'-phosphopantetheine + ATP + H(+) = 3'-dephospho-CoA + diphosphate. The protein operates within cofactor biosynthesis; coenzyme A biosynthesis; CoA from (R)-pantothenate: step 4/5. Its function is as follows. Reversibly transfers an adenylyl group from ATP to 4'-phosphopantetheine, yielding dephospho-CoA (dPCoA) and pyrophosphate. In Leptospira borgpetersenii serovar Hardjo-bovis (strain L550), this protein is Phosphopantetheine adenylyltransferase.